A 405-amino-acid chain; its full sequence is ATP-sensitive inward rectifier potassium channel 15 (405 aa).

Residues 1 to 90 (MVARWVKGSE…LQDLWTTVID (90 aa)) lie on the Cytoplasmic side of the membrane. The chain crosses the membrane as a helical span at residues 91 to 117 (MKWRYKLTLFAATFVMTWFLFGVVYYA). Residues 118–143 (IAFIHGDLELGESNSNHTPCIMKVDS) lie on the Extracellular side of the membrane. Residues 144 to 160 (LTGAFLFSLESQTTIGY) constitute an intramembrane region (helical; Pore-forming). A Selectivity filter motif is present at residues 157–162 (TIGYGV). Residues 161 to 169 (GVRSITEEC) are Extracellular-facing. Residues 170-195 (PHAIFLLVAQLVITTLIEIFITGTFL) traverse the membrane as a helical segment. Topologically, residues 196–405 (AKIARPKKRA…RSLLLQQSNV (210 aa)) are cytoplasmic.

This sequence belongs to the inward rectifier-type potassium channel (TC 1.A.2.1) family. KCNJ15 subfamily. As to quaternary structure, can form heteromultimeric channels with Kir5.1/KCNJ16. Interacts with PATJ.

The protein resides in the membrane. It is found in the cell membrane. It catalyses the reaction K(+)(in) = K(+)(out). Channel activity is regulated by variations of cytosolic pH; reversibly inhibited by acidic pH values. Inhibited by Ba(2+) and Cs(+) in a voltage-dependent manner. Functionally, inward rectifier potassium channels are characterized by a greater tendency to allow potassium to flow into the cell rather than out of it. Their voltage dependence is regulated by the concentration of extracellular potassium; as external potassium is raised, the voltage range of the channel opening shifts to more positive voltages. The inward rectification is mainly due to the blockage of outward current by internal magnesium. The protein is ATP-sensitive inward rectifier potassium channel 15 (Kcnj15) of Rattus norvegicus (Rat).